The following is a 91-amino-acid chain: MSRTIFCTFLQREAEGQDFQLYPGELGKRIYNEISKEAWAQWQHKQTMLINEKKLNMMNVEHRKLLEQEMINFLFEGKDVHIEGYTPEEKK.

Belongs to the Fe(2+)-trafficking protein family. Monomer.

Could be a mediator in iron transactions between iron acquisition and iron-requiring processes, such as synthesis and/or repair of Fe-S clusters in biosynthetic enzymes. This is Probable Fe(2+)-trafficking protein from Citrobacter koseri (strain ATCC BAA-895 / CDC 4225-83 / SGSC4696).